Consider the following 421-residue polypeptide: AA11 family lytic polysaccharide monooxygenase (421 aa).

An N-terminal signal peptide occupies residues Met1–Gly19. Positions 20, 79, and 93 each coordinate Cu(+). Intrachain disulfides connect Cys48/Cys162, Cys84/Cys110, and Cys201/Cys235. Asn117 carries N-linked (GlcNAc...) asparagine glycosylation. Positions Gly231 to Leu349 are disordered. The span at Thr247–Thr285 shows a compositional bias: low complexity. The segment covering Ser304 to Pro314 has biased composition (polar residues). Over residues Ser315–Leu349 the composition is skewed to low complexity.

This sequence belongs to the polysaccharide monooxygenase AA11 family. The cofactor is Cu(2+).

Lytic polysaccharide monooxygenase (LPMO) that depolymerizes chitin via the oxidation of scissile beta-(1-4)-glycosidic bonds, yielding C1 or C4 oxidation products. Catalysis by LPMOs requires the reduction of the active-site copper from Cu(II) to Cu(I) by a reducing agent and H(2)O(2) or O(2) as a cosubstrate. Active on chitin but has no activity on other substrates, including diverse mannans, cellulose and starch (data not shown). Primary chain cleavage yields predominantly aldonic acid oligosaccharides with even-numbered degrees of polymerization. This Aspergillus oryzae (strain ATCC 42149 / RIB 40) (Yellow koji mold) protein is AA11 family lytic polysaccharide monooxygenase.